Consider the following 113-residue polypeptide: uncharacterized protein (113 aa).

A helical transmembrane segment spans residues 4-26; that stretch reads VLFKIAVALLYLLSFFLHRLHLR. Residues 32–74 are disordered; it reads RRRRRRHHRRHHRRHHHHRRRRRRRRRRRRRHHRHHHHRHRRR.

Its subcellular location is the membrane. This is an uncharacterized protein from Saccharomyces cerevisiae (strain ATCC 204508 / S288c) (Baker's yeast).